Here is a 321-residue protein sequence, read N- to C-terminus: Nucleotide-binding protein LI0459 (321 aa).

41–48 (GMSGAGKS) lines the ATP pocket.

Belongs to the RapZ-like family.

Displays ATPase and GTPase activities. This is Nucleotide-binding protein LI0459 from Lawsonia intracellularis (strain PHE/MN1-00).